Consider the following 231-residue polypeptide: Fibrillarin-like rRNA/tRNA 2'-O-methyltransferase (231 aa).

Residues 88-89 (TT), 106-107 (EF), 131-132 (DA), and 151-154 (DVAQ) each bind S-adenosyl-L-methionine.

It belongs to the methyltransferase superfamily. Fibrillarin family. In terms of assembly, interacts with nop5. Component of box C/D small ribonucleoprotein (sRNP) particles that contain rpl7ae, FlpA and nop5, plus a guide RNA.

Involved in pre-rRNA and tRNA processing. Utilizes the methyl donor S-adenosyl-L-methionine to catalyze the site-specific 2'-hydroxyl methylation of ribose moieties in rRNA and tRNA. Site specificity is provided by a guide RNA that base pairs with the substrate. Methylation occurs at a characteristic distance from the sequence involved in base pairing with the guide RNA. The chain is Fibrillarin-like rRNA/tRNA 2'-O-methyltransferase from Methanococcus aeolicus (strain ATCC BAA-1280 / DSM 17508 / OCM 812 / Nankai-3).